The sequence spans 335 residues: Ornithine carbamoyltransferase (335 aa).

Carbamoyl phosphate contacts are provided by residues 60–63, Gln87, Arg111, and 138–141; these read STRT and HPTQ. L-ornithine contacts are provided by residues Asn171, Asp235, and 239–240; that span reads SM. Residues 277–278 and Arg322 contribute to the carbamoyl phosphate site; that span reads CL.

It belongs to the aspartate/ornithine carbamoyltransferase superfamily. OTCase family.

The protein localises to the cytoplasm. The enzyme catalyses carbamoyl phosphate + L-ornithine = L-citrulline + phosphate + H(+). It participates in amino-acid biosynthesis; L-arginine biosynthesis; L-arginine from L-ornithine and carbamoyl phosphate: step 1/3. Its function is as follows. Reversibly catalyzes the transfer of the carbamoyl group from carbamoyl phosphate (CP) to the N(epsilon) atom of ornithine (ORN) to produce L-citrulline. The protein is Ornithine carbamoyltransferase of Streptomyces avermitilis (strain ATCC 31267 / DSM 46492 / JCM 5070 / NBRC 14893 / NCIMB 12804 / NRRL 8165 / MA-4680).